The chain runs to 355 residues: Protein RecA (355 aa).

72 to 79 (GPESSGKT) provides a ligand contact to ATP.

This sequence belongs to the RecA family.

The protein localises to the cytoplasm. In terms of biological role, can catalyze the hydrolysis of ATP in the presence of single-stranded DNA, the ATP-dependent uptake of single-stranded DNA by duplex DNA, and the ATP-dependent hybridization of homologous single-stranded DNAs. It interacts with LexA causing its activation and leading to its autocatalytic cleavage. The protein is Protein RecA of Wolbachia sp. subsp. Brugia malayi (strain TRS).